Here is a 599-residue protein sequence, read N- to C-terminus: Sulfite reductase [NADPH] flavoprotein alpha-component (599 aa).

The region spanning 64–202 (VTLISASQTG…AASEWRARVV (139 aa)) is the Flavodoxin-like domain. Residues 70–75 (SQTGNA), 117–120 (STQG), and 153–162 (LGDTSYEFFC) contribute to the FMN site. Residues 234 to 448 (DAPLAATLSV…IEHNDNFRLP (215 aa)) form the FAD-binding FR-type domain. Residues Thr-322, Ala-356, 386–389 (RLYS), 404–406 (TVG), Tyr-410, and 419–422 (GGAS) each bind FAD. Residues 519–520 (SR), 525–529 (KIYVQ), and Asp-561 contribute to the NADP(+) site. Tyr-599 contacts FAD.

Belongs to the NADPH-dependent sulphite reductase flavoprotein subunit CysJ family. The protein in the N-terminal section; belongs to the flavodoxin family. It in the C-terminal section; belongs to the flavoprotein pyridine nucleotide cytochrome reductase family. Alpha(8)-beta(8). The alpha component is a flavoprotein, the beta component is a hemoprotein. Requires FAD as cofactor. FMN is required as a cofactor.

It catalyses the reaction hydrogen sulfide + 3 NADP(+) + 3 H2O = sulfite + 3 NADPH + 4 H(+). Its pathway is sulfur metabolism; hydrogen sulfide biosynthesis; hydrogen sulfide from sulfite (NADPH route): step 1/1. Component of the sulfite reductase complex that catalyzes the 6-electron reduction of sulfite to sulfide. This is one of several activities required for the biosynthesis of L-cysteine from sulfate. The flavoprotein component catalyzes the electron flow from NADPH -&gt; FAD -&gt; FMN to the hemoprotein component. The polypeptide is Sulfite reductase [NADPH] flavoprotein alpha-component (Salmonella paratyphi B (strain ATCC BAA-1250 / SPB7)).